The chain runs to 868 residues: Leucine--tRNA ligase (868 aa).

The 'HIGH' region signature appears at 42 to 52 (PYPSGKLHMGH). The short motif at 627 to 631 (KMSKS) is the 'KMSKS' region element. Lys-630 is an ATP binding site.

It belongs to the class-I aminoacyl-tRNA synthetase family.

Its subcellular location is the cytoplasm. The catalysed reaction is tRNA(Leu) + L-leucine + ATP = L-leucyl-tRNA(Leu) + AMP + diphosphate. The polypeptide is Leucine--tRNA ligase (Pseudomonas entomophila (strain L48)).